Here is a 187-residue protein sequence, read N- to C-terminus: Translation initiation factor IF-3 (187 aa).

Belongs to the IF-3 family. In terms of assembly, monomer.

It is found in the cytoplasm. Functionally, IF-3 binds to the 30S ribosomal subunit and shifts the equilibrium between 70S ribosomes and their 50S and 30S subunits in favor of the free subunits, thus enhancing the availability of 30S subunits on which protein synthesis initiation begins. The sequence is that of Translation initiation factor IF-3 from Leptospira biflexa serovar Patoc (strain Patoc 1 / Ames).